Reading from the N-terminus, the 275-residue chain is Diaminopimelate epimerase (275 aa).

Substrate contacts are provided by N12, Q45, and N65. The Proton donor role is filled by C74. Substrate-binding positions include 75-76 (GN), N158, N191, and 209-210 (ER). The active-site Proton acceptor is C218. 219-220 (GT) provides a ligand contact to substrate.

The protein belongs to the diaminopimelate epimerase family. In terms of assembly, homodimer.

Its subcellular location is the cytoplasm. It catalyses the reaction (2S,6S)-2,6-diaminopimelate = meso-2,6-diaminopimelate. It participates in amino-acid biosynthesis; L-lysine biosynthesis via DAP pathway; DL-2,6-diaminopimelate from LL-2,6-diaminopimelate: step 1/1. In terms of biological role, catalyzes the stereoinversion of LL-2,6-diaminopimelate (L,L-DAP) to meso-diaminopimelate (meso-DAP), a precursor of L-lysine and an essential component of the bacterial peptidoglycan. This is Diaminopimelate epimerase from Shewanella oneidensis (strain ATCC 700550 / JCM 31522 / CIP 106686 / LMG 19005 / NCIMB 14063 / MR-1).